The chain runs to 228 residues: Ribosomal RNA small subunit methyltransferase G (228 aa).

S-adenosyl-L-methionine-binding positions include Gly89, Leu94, 140–141, and Arg159; that span reads VE.

This sequence belongs to the methyltransferase superfamily. RNA methyltransferase RsmG family.

The protein resides in the cytoplasm. The enzyme catalyses guanosine(527) in 16S rRNA + S-adenosyl-L-methionine = N(7)-methylguanosine(527) in 16S rRNA + S-adenosyl-L-homocysteine. Specifically methylates the N7 position of guanine in position 527 of 16S rRNA. This chain is Ribosomal RNA small subunit methyltransferase G, found in Burkholderia vietnamiensis (strain G4 / LMG 22486) (Burkholderia cepacia (strain R1808)).